We begin with the raw amino-acid sequence, 132 residues long: Small ribosomal subunit protein uS8 (132 aa).

The protein belongs to the universal ribosomal protein uS8 family. Part of the 30S ribosomal subunit. Contacts proteins S5 and S12.

In terms of biological role, one of the primary rRNA binding proteins, it binds directly to 16S rRNA central domain where it helps coordinate assembly of the platform of the 30S subunit. The chain is Small ribosomal subunit protein uS8 from Rickettsia canadensis (strain McKiel).